An 825-amino-acid polypeptide reads, in one-letter code: Phenylalanine--tRNA ligase beta subunit (825 aa).

Positions 39-154 (RTWADGVVLG…EAHPLGSDVR (116 aa)) constitute a tRNA-binding domain. In terms of domain architecture, B5 spans 411–506 (PLERTLKLRL…RLYGYDRFSE (96 aa)). The Mg(2+) site is built by Asp484, Asp490, Glu493, and Glu494. Residues 731–824 (SPFPAADRDI…LATQFPVTLR (94 aa)) enclose the FDX-ACB domain.

Belongs to the phenylalanyl-tRNA synthetase beta subunit family. Type 1 subfamily. As to quaternary structure, tetramer of two alpha and two beta subunits. Mg(2+) serves as cofactor.

It is found in the cytoplasm. The enzyme catalyses tRNA(Phe) + L-phenylalanine + ATP = L-phenylalanyl-tRNA(Phe) + AMP + diphosphate + H(+). This chain is Phenylalanine--tRNA ligase beta subunit, found in Synechococcus sp. (strain JA-2-3B'a(2-13)) (Cyanobacteria bacterium Yellowstone B-Prime).